A 120-amino-acid chain; its full sequence is Ribosome-binding factor A (120 aa).

The protein belongs to the RbfA family. As to quaternary structure, monomer. Binds 30S ribosomal subunits, but not 50S ribosomal subunits or 70S ribosomes.

The protein localises to the cytoplasm. Its function is as follows. One of several proteins that assist in the late maturation steps of the functional core of the 30S ribosomal subunit. Associates with free 30S ribosomal subunits (but not with 30S subunits that are part of 70S ribosomes or polysomes). Required for efficient processing of 16S rRNA. May interact with the 5'-terminal helix region of 16S rRNA. The sequence is that of Ribosome-binding factor A from Clostridium botulinum (strain Okra / Type B1).